We begin with the raw amino-acid sequence, 175 residues long: Large ribosomal subunit protein uL10 (175 aa).

It belongs to the universal ribosomal protein uL10 family. In terms of assembly, part of the ribosomal stalk of the 50S ribosomal subunit. The N-terminus interacts with L11 and the large rRNA to form the base of the stalk. The C-terminus forms an elongated spine to which L12 dimers bind in a sequential fashion forming a multimeric L10(L12)X complex.

Functionally, forms part of the ribosomal stalk, playing a central role in the interaction of the ribosome with GTP-bound translation factors. The chain is Large ribosomal subunit protein uL10 from Mycolicibacterium smegmatis (strain ATCC 700084 / mc(2)155) (Mycobacterium smegmatis).